Here is a 174-residue protein sequence, read N- to C-terminus: MIQYLQVGKIVNTHGIKGEVKAIPLTDNPRRFNKLKWAYVSKEISNEMPKFDIVSVKHHKNFVILKFSGIDDMNAAEKLKEHFVIIDRKDAVKLPKDTFFICDLIGMNVFDTEEKKLGVLTDVLSTGSNDVYVVKSDNNKEILIPALKSVVKKVCFEDNKMVVDLPQGLIDDEV.

A PRC barrel domain is found at K96–L169.

The protein belongs to the RimM family. In terms of assembly, binds ribosomal protein uS19.

The protein resides in the cytoplasm. An accessory protein needed during the final step in the assembly of 30S ribosomal subunit, possibly for assembly of the head region. Essential for efficient processing of 16S rRNA. May be needed both before and after RbfA during the maturation of 16S rRNA. It has affinity for free ribosomal 30S subunits but not for 70S ribosomes. The sequence is that of Ribosome maturation factor RimM from Acetivibrio thermocellus (strain ATCC 27405 / DSM 1237 / JCM 9322 / NBRC 103400 / NCIMB 10682 / NRRL B-4536 / VPI 7372) (Clostridium thermocellum).